Here is a 281-residue protein sequence, read N- to C-terminus: Proteasome subunit beta (281 aa).

A propeptide spans 1-53 (removed in mature form; by autocatalysis); that stretch reads MEANTRSTGRLPAAFLTPGSSSFMDFLSDQSPEMLPGNRSLPPLQGAVEAPHG. Residue T54 is the Nucleophile of the active site.

This sequence belongs to the peptidase T1B family. As to quaternary structure, the 20S proteasome core is composed of 14 alpha and 14 beta subunits that assemble into four stacked heptameric rings, resulting in a barrel-shaped structure. The two inner rings, each composed of seven catalytic beta subunits, are sandwiched by two outer rings, each composed of seven alpha subunits. The catalytic chamber with the active sites is on the inside of the barrel. Has a gated structure, the ends of the cylinder being occluded by the N-termini of the alpha-subunits. Is capped by the proteasome-associated ATPase, ARC.

It localises to the cytoplasm. It carries out the reaction Cleavage of peptide bonds with very broad specificity.. Its pathway is protein degradation; proteasomal Pup-dependent pathway. The formation of the proteasomal ATPase ARC-20S proteasome complex, likely via the docking of the C-termini of ARC into the intersubunit pockets in the alpha-rings, may trigger opening of the gate for substrate entry. Interconversion between the open-gate and close-gate conformations leads to a dynamic regulation of the 20S proteasome proteolysis activity. Functionally, component of the proteasome core, a large protease complex with broad specificity involved in protein degradation. The protein is Proteasome subunit beta of Streptomyces griseus subsp. griseus (strain JCM 4626 / CBS 651.72 / NBRC 13350 / KCC S-0626 / ISP 5235).